A 256-amino-acid polypeptide reads, in one-letter code: uncharacterized protein (256 aa).

8 residues coordinate NADP(+): Ile-18, Ser-37, Lys-46, Asp-66, Tyr-164, Lys-168, Val-197, and Thr-199. Tyr-164 serves as the catalytic Proton donor. Lys-168 serves as the catalytic Lowers pKa of active site Tyr.

It belongs to the short-chain dehydrogenases/reductases (SDR) family.

Its subcellular location is the cytoplasm. This is an uncharacterized protein from Saccharomyces cerevisiae (strain ATCC 204508 / S288c) (Baker's yeast).